The chain runs to 155 residues: Deoxyuridine 5'-triphosphate nucleotidohydrolase (155 aa).

Residues 74–76 (RSG), Asn87, and 91–93 (LID) contribute to the substrate site.

The protein belongs to the dUTPase family. Mg(2+) is required as a cofactor.

It carries out the reaction dUTP + H2O = dUMP + diphosphate + H(+). Its pathway is pyrimidine metabolism; dUMP biosynthesis; dUMP from dCTP (dUTP route): step 2/2. Its function is as follows. This enzyme is involved in nucleotide metabolism: it produces dUMP, the immediate precursor of thymidine nucleotides and it decreases the intracellular concentration of dUTP so that uracil cannot be incorporated into DNA. This is Deoxyuridine 5'-triphosphate nucleotidohydrolase from Xanthomonas oryzae pv. oryzae (strain PXO99A).